The following is a 377-amino-acid chain: Homoserine O-acetyltransferase (377 aa).

The AB hydrolase-1 domain maps to 47–355; it reads NAILICHALT…DYGHDAFLLE (309 aa). S153 (nucleophile) is an active-site residue. Residue R222 participates in substrate binding. Active-site residues include D316 and H349. D350 serves as a coordination point for substrate.

Belongs to the AB hydrolase superfamily. MetX family. In terms of assembly, homodimer.

The protein localises to the cytoplasm. It carries out the reaction L-homoserine + acetyl-CoA = O-acetyl-L-homoserine + CoA. It functions in the pathway amino-acid biosynthesis; L-methionine biosynthesis via de novo pathway; O-acetyl-L-homoserine from L-homoserine: step 1/1. Transfers an acetyl group from acetyl-CoA to L-homoserine, forming acetyl-L-homoserine. This is Homoserine O-acetyltransferase from Deferribacter desulfuricans (strain DSM 14783 / JCM 11476 / NBRC 101012 / SSM1).